Consider the following 419-residue polypeptide: G protein-activated inward rectifier potassium channel 4 (419 aa).

The Cytoplasmic portion of the chain corresponds to 1–86 (MAGDSRNAMN…LFTTLVDLKW (86 aa)). Ser5 carries the post-translational modification Phosphoserine. A helical transmembrane segment spans residues 87 to 111 (RFNLLVFTMVYTVTWLFFGFIWWLI). Topologically, residues 112–135 (AYIRGDLDHVGDQEWIPCVENLSG) are extracellular. Positions 136–147 (FVSAFLFSIETE) form an intramembrane region, helical; Pore-forming. Residues 148–154 (TTIGYGF) constitute an intramembrane region (pore-forming). The Selectivity filter motif lies at 149–154 (TIGYGF). Residues 155–163 (RVITEKCPE) are Extracellular-facing. Residues 164–185 (GIILLLVQAILGSIVNAFMVGC) form a helical membrane-spanning segment. At 186-419 (MFVKISQPKK…GGSREARGSV (234 aa)) the chain is on the cytoplasmic side. The interval 390–419 (AEAGLDAEAEQNEEDEPKGLGGSREARGSV) is disordered. Positions 394-405 (LDAEAEQNEEDE) are enriched in acidic residues.

Belongs to the inward rectifier-type potassium channel (TC 1.A.2.1) family. KCNJ5 subfamily. In terms of assembly, associates with KCNJ3/GIRK1 to form a G-protein-activated heteromultimer pore-forming unit. The resulting inward current is much larger. Associates with KCNJ6/GIRK2 to form a G-protein-activated heteromultimer pore-forming unit. In terms of tissue distribution, islets, exocrine pancreas and heart. Expressed in the adrenal cortex, particularly the zona glomerulosa.

It localises to the membrane. The enzyme catalyses K(+)(in) = K(+)(out). With respect to regulation, heteromultimer composed of KCNJ3/GIRK1 and KCNJ5/GIRK4 is activated by phosphatidylinositol 4,5 biphosphate (PtdIns(4,5)P2). Functionally, inward rectifier potassium channels are characterized by a greater tendency to allow potassium to flow into the cell rather than out of it. Their voltage dependence is regulated by the concentration of extracellular potassium; as external potassium is raised, the voltage range of the channel opening shifts to more positive voltages. The inward rectification is mainly due to the blockage of outward current by internal magnesium. Can be blocked by external barium. This potassium channel is controlled by G proteins. The sequence is that of G protein-activated inward rectifier potassium channel 4 (KCNJ5) from Homo sapiens (Human).